The chain runs to 611 residues: Dihydroxy-acid dehydratase (611 aa).

Asp81 contacts Mg(2+). Cys122 contributes to the [2Fe-2S] cluster binding site. 2 residues coordinate Mg(2+): Asp123 and Lys124. Residue Lys124 is modified to N6-carboxylysine. Cys195 is a [2Fe-2S] cluster binding site. A Mg(2+)-binding site is contributed by Glu491. The active-site Proton acceptor is the Ser517.

Belongs to the IlvD/Edd family. In terms of assembly, homodimer. The cofactor is [2Fe-2S] cluster. Requires Mg(2+) as cofactor.

It carries out the reaction (2R)-2,3-dihydroxy-3-methylbutanoate = 3-methyl-2-oxobutanoate + H2O. It catalyses the reaction (2R,3R)-2,3-dihydroxy-3-methylpentanoate = (S)-3-methyl-2-oxopentanoate + H2O. It participates in amino-acid biosynthesis; L-isoleucine biosynthesis; L-isoleucine from 2-oxobutanoate: step 3/4. Its pathway is amino-acid biosynthesis; L-valine biosynthesis; L-valine from pyruvate: step 3/4. In terms of biological role, functions in the biosynthesis of branched-chain amino acids. Catalyzes the dehydration of (2R,3R)-2,3-dihydroxy-3-methylpentanoate (2,3-dihydroxy-3-methylvalerate) into 2-oxo-3-methylpentanoate (2-oxo-3-methylvalerate) and of (2R)-2,3-dihydroxy-3-methylbutanoate (2,3-dihydroxyisovalerate) into 2-oxo-3-methylbutanoate (2-oxoisovalerate), the penultimate precursor to L-isoleucine and L-valine, respectively. This Agrobacterium fabrum (strain C58 / ATCC 33970) (Agrobacterium tumefaciens (strain C58)) protein is Dihydroxy-acid dehydratase.